A 337-amino-acid polypeptide reads, in one-letter code: Diacylglycerol O-acyltransferase 2-like protein 6 (337 aa).

2 consecutive transmembrane segments (helical) span residues 22 to 42 (IPVYVLLGTLSILGMPYLLLF) and 102 to 122 (YIILSHPHGILSYGAFINFAT).

It belongs to the diacylglycerol acyltransferase family.

The protein resides in the endoplasmic reticulum membrane. It carries out the reaction 1,2-di-(9Z-octadecenoyl)-sn-glycerol + (9Z)-octadecenoyl-CoA = 1,2,3-tri-(9Z-octadecenoyl)-glycerol + CoA. Functionally, diglyceride acyltransferase that uses fatty acyl-CoA as substrate. Particularly active with oleate as a substrate. Has no wax synthase activity to produce wax esters. This chain is Diacylglycerol O-acyltransferase 2-like protein 6 (Dgat2l6), found in Mus musculus (Mouse).